A 486-amino-acid chain; its full sequence is MVATPSTSSQTKGVVRQVIGPVLDVEFPAGKLPKILNALRIEAKNPAGQDIALTAEVQQLLGDHRVRAVAMSGTDGLVRGMEAIDTGAPISVPVGEATLGRIFNVLGEPVDEQGPVNTKDTAPIHRAAPKLTDLETKPKVFETGIKVIDLLAPYRQGGKVGLFGGAGVGKTVLIQELINNIAKEHGGVSVFGGVGERTREGNDLYEEFKESGVINADDLTQSKVALCFGQMNEPPGARMRVGLSALTMAEHFRDVNKQDVLLFVDNIFRFVQAGSEVSALLGRMPSAVGYQPTLGTDVGELQERITSTLEGSITSIQAVYVPADDLTDPAPATTFAHLDATTVLARALAAKGIYPAVDPLDSTSTMLQPSVVGDEHYKTARAVQSTLQRYKELQDIIAILGLDELSEEDRLTVDRARKIEKFLSQPFFVAEIFTGMSGKYVKLEDTIAGFNMILSGELDDLPEQAFYLVGNIDEVKAKAEKIKSEK.

164-171 (GGAGVGKT) is a binding site for ATP.

Belongs to the ATPase alpha/beta chains family. In terms of assembly, F-type ATPases have 2 components, CF(1) - the catalytic core - and CF(0) - the membrane proton channel. CF(1) has five subunits: alpha(3), beta(3), gamma(1), delta(1), epsilon(1). CF(0) has four main subunits: a(1), b(1), b'(1) and c(9-12).

Its subcellular location is the cellular thylakoid membrane. The enzyme catalyses ATP + H2O + 4 H(+)(in) = ADP + phosphate + 5 H(+)(out). In terms of biological role, produces ATP from ADP in the presence of a proton gradient across the membrane. The catalytic sites are hosted primarily by the beta subunits. The polypeptide is ATP synthase subunit beta (Prochlorococcus marinus (strain MIT 9301)).